We begin with the raw amino-acid sequence, 289 residues long: Digeranylgeranylglyceryl phosphate synthase (289 aa).

8 helical membrane passes run 17 to 37 (CLMA…ILTS), 50 to 70 (LFSS…GNAI), 106 to 126 (FALG…IALF), 141 to 161 (TPLL…LFGA), 163 to 183 (VFGL…ALAI), 221 to 241 (LIGF…MLGL), 243 to 263 (YLYL…QLLA), and 269 to 289 (KSSK…IAGV).

It belongs to the UbiA prenyltransferase family. DGGGP synthase subfamily. Requires Mg(2+) as cofactor.

The protein resides in the cell membrane. The enzyme catalyses sn-3-O-(geranylgeranyl)glycerol 1-phosphate + (2E,6E,10E)-geranylgeranyl diphosphate = 2,3-bis-O-(geranylgeranyl)-sn-glycerol 1-phosphate + diphosphate. It functions in the pathway membrane lipid metabolism; glycerophospholipid metabolism. Functionally, prenyltransferase that catalyzes the transfer of the geranylgeranyl moiety of geranylgeranyl diphosphate (GGPP) to the C2 hydroxyl of (S)-3-O-geranylgeranylglyceryl phosphate (GGGP). This reaction is the second ether-bond-formation step in the biosynthesis of archaeal membrane lipids. This Methanosarcina barkeri (strain Fusaro / DSM 804) protein is Digeranylgeranylglyceryl phosphate synthase.